Consider the following 526-residue polypeptide: Probable feruloyl esterase B-1 (526 aa).

Residues 1–19 (MPSLRRLLPFLAAGSAALA) form the signal peptide. 2 cysteine pairs are disulfide-bonded: cysteine 28-cysteine 75 and cysteine 63-cysteine 114. N-linked (GlcNAc...) asparagine glycosylation is found at asparagine 53, asparagine 85, asparagine 98, and asparagine 138. Cystine bridges form between cysteine 187/cysteine 441, cysteine 256/cysteine 273, and cysteine 282/cysteine 291. Serine 188 (acyl-ester intermediate) is an active-site residue. Residue asparagine 246 is glycosylated (N-linked (GlcNAc...) asparagine). Residues aspartate 257, aspartate 260, alanine 262, aspartate 264, and isoleucine 266 each contribute to the Ca(2+) site. 2 N-linked (GlcNAc...) asparagine glycosylation sites follow: asparagine 287 and asparagine 311. Residues aspartate 400 and histidine 440 each act as charge relay system in the active site. N-linked (GlcNAc...) asparagine glycans are attached at residues asparagine 490 and asparagine 516. A disulfide bridge connects residues cysteine 503 and cysteine 525.

This sequence belongs to the tannase family.

It localises to the secreted. It catalyses the reaction feruloyl-polysaccharide + H2O = ferulate + polysaccharide.. Functionally, involved in degradation of plant cell walls. Hydrolyzes the feruloyl-arabinose ester bond in arabinoxylans as well as the feruloyl-galactose and feruloyl-arabinose ester bonds in pectin. This is Probable feruloyl esterase B-1 (faeB-1) from Aspergillus flavus (strain ATCC 200026 / FGSC A1120 / IAM 13836 / NRRL 3357 / JCM 12722 / SRRC 167).